A 108-amino-acid polypeptide reads, in one-letter code: Nucleoid-associated protein BTH_I2220 (108 aa).

This sequence belongs to the YbaB/EbfC family. In terms of assembly, homodimer.

The protein localises to the cytoplasm. It is found in the nucleoid. Its function is as follows. Binds to DNA and alters its conformation. May be involved in regulation of gene expression, nucleoid organization and DNA protection. In Burkholderia thailandensis (strain ATCC 700388 / DSM 13276 / CCUG 48851 / CIP 106301 / E264), this protein is Nucleoid-associated protein BTH_I2220.